Reading from the N-terminus, the 130-residue chain is Small ribosomal subunit protein uS8A (130 aa).

This sequence belongs to the universal ribosomal protein uS8 family. Component of the small ribosomal subunit (SSU). Mature ribosomes consist of a small (40S) and a large (60S) subunit. The 40S subunit contains about 32 different proteins and 1 molecule of RNA (18S). The 60S subunit contains 45 different proteins and 3 molecules of RNA (25S, 5.8S and 5S).

It localises to the cytoplasm. Functionally, component of the ribosome, a large ribonucleoprotein complex responsible for the synthesis of proteins in the cell. The small ribosomal subunit (SSU) binds messenger RNAs (mRNAs) and translates the encoded message by selecting cognate aminoacyl-transfer RNA (tRNA) molecules. The large subunit (LSU) contains the ribosomal catalytic site termed the peptidyl transferase center (PTC), which catalyzes the formation of peptide bonds, thereby polymerizing the amino acids delivered by tRNAs into a polypeptide chain. The nascent polypeptides leave the ribosome through a tunnel in the LSU and interact with protein factors that function in enzymatic processing, targeting, and the membrane insertion of nascent chains at the exit of the ribosomal tunnel. This is Small ribosomal subunit protein uS8A (RPS22A) from Candida albicans (strain SC5314 / ATCC MYA-2876) (Yeast).